Here is a 274-residue protein sequence, read N- to C-terminus: Nitrogenase iron protein (274 aa).

8 to 15 (GKGGIGKS) is a binding site for ATP. Residue C94 participates in [4Fe-4S] cluster binding. R97 bears the ADP-ribosylarginine; by dinitrogenase reductase ADP-ribosyltransferase mark. C131 contacts [4Fe-4S] cluster.

Belongs to the NifH/BchL/ChlL family. As to quaternary structure, homodimer. [4Fe-4S] cluster is required as a cofactor. Post-translationally, the reversible ADP-ribosylation of Arg-97 inactivates the nitrogenase reductase and regulates nitrogenase activity.

The catalysed reaction is N2 + 8 reduced [2Fe-2S]-[ferredoxin] + 16 ATP + 16 H2O = H2 + 8 oxidized [2Fe-2S]-[ferredoxin] + 2 NH4(+) + 16 ADP + 16 phosphate + 6 H(+). Its function is as follows. The key enzymatic reactions in nitrogen fixation are catalyzed by the nitrogenase complex, which has 2 components: the iron protein and the molybdenum-iron protein. The sequence is that of Nitrogenase iron protein from Dehalococcoides mccartyi (strain ATCC BAA-2266 / KCTC 15142 / 195) (Dehalococcoides ethenogenes (strain 195)).